Here is a 359-residue protein sequence, read N- to C-terminus: CMP-N-acetylneuraminate-poly-alpha-2,8-sialyltransferase (359 aa).

At 1–7 (MRSIRKR) the chain is on the cytoplasmic side. A helical; Signal-anchor for type II membrane protein transmembrane segment spans residues 8–20 (WTICTISLLLIFY). Over 21 to 359 (KTKEIARTEE…KLTTGKCVKQ (339 aa)) the chain is Lumenal. N-linked (GlcNAc...) asparagine glycosylation is found at N50, N74, and N119. Disulfide bonds link C142–C292 and C156–C356. Residues N147 and N170 each coordinate CMP-N-acetyl-beta-neuraminate. N-linked (GlcNAc...) asparagine glycosylation is found at N204 and N219. Positions 279, 280, 281, and 301 each coordinate CMP-N-acetyl-beta-neuraminate. H331 functions as the Proton donor/acceptor in the catalytic mechanism.

Belongs to the glycosyltransferase 29 family. Autopolysialylated.

It is found in the golgi apparatus membrane. It localises to the secreted. The catalysed reaction is [N-acetyl-alpha-D-neuraminosyl-(2-&gt;8)](n) + CMP-N-acetyl-beta-neuraminate = [N-acetyl-alpha-D-neuraminosyl-(2-&gt;8)](n+1) + CMP + H(+). In terms of biological role, catalyzes the transfer of a sialic acid from a CMP-linked sialic acid donor onto a terminal alpha-2,3-, alpha-2,6-, or alpha-2,8-linked sialic acid of an N-linked glycan protein acceptor through alpha-2,8-linkages. Therefore, participates in polysialic acid synthesis on various sialylated N-acetyllactosaminyl oligosaccharides, including NCAM1 N-glycans, FETUB N-glycans and AHSG. It is noteworthy that alpha-2,3-linked sialic acid is apparently a better acceptor than alpha-2,6-linked sialic acid. This Pan troglodytes (Chimpanzee) protein is CMP-N-acetylneuraminate-poly-alpha-2,8-sialyltransferase (ST8SIA4).